The primary structure comprises 135 residues: Large ribosomal subunit protein uL16c (135 aa).

A compositionally biased stretch (basic residues) spans 1-17; sequence MLSPKRTRFRKQHRGRM. Residues 1-20 are disordered; that stretch reads MLSPKRTRFRKQHRGRMKGT.

It belongs to the universal ribosomal protein uL16 family. Part of the 50S ribosomal subunit.

Its subcellular location is the plastid. The protein localises to the chloroplast. This Lemna minor (Common duckweed) protein is Large ribosomal subunit protein uL16c.